The following is a 367-amino-acid chain: Putative S-adenosyl-L-methionine-dependent methyltransferase MT0751 (367 aa).

S-adenosyl-L-methionine-binding positions include Asp137 and Asp166–Leu167. Positions Thr348–Thr358 are enriched in polar residues. Residues Thr348–Gly367 are disordered.

This sequence belongs to the UPF0677 family.

Functionally, exhibits S-adenosyl-L-methionine-dependent methyltransferase activity. The chain is Putative S-adenosyl-L-methionine-dependent methyltransferase MT0751 from Mycobacterium tuberculosis (strain CDC 1551 / Oshkosh).